A 274-amino-acid chain; its full sequence is Transcription factor MYB58 (274 aa).

HTH myb-type domains follow at residues 11–63 (KTKV…INYL) and 64–118 (RPDV…KKRL). DNA-binding regions (H-T-H motif) lie at residues 39-63 (WRSL…INYL) and 91-114 (WSKI…HTHL). Disordered regions lie at residues 121–160 (ETNL…ISSK) and 237–274 (SELG…LLIH). The span at 263–274 (SSLLESYELLIH) shows a compositional bias: low complexity.

In terms of tissue distribution, expressed in leaves. Specifically expressed in fibers and vessels undergoing secondary wall thickening, especially in inflorescence stems.

The protein resides in the nucleus. Transcriptional activator that binds DNA to the AC cis-elements 5'-ACCTACC-3', 5'-ACCAACC-3' and 5'-ACCTAAC-3' of promoters and specifically activates lignin biosynthetic genes during secondary wall formation mediated by SND1. This chain is Transcription factor MYB58, found in Arabidopsis thaliana (Mouse-ear cress).